An 88-amino-acid chain; its full sequence is Small ribosomal subunit protein uS17 (88 aa).

The protein belongs to the universal ribosomal protein uS17 family. Part of the 30S ribosomal subunit.

In terms of biological role, one of the primary rRNA binding proteins, it binds specifically to the 5'-end of 16S ribosomal RNA. The sequence is that of Small ribosomal subunit protein uS17 from Saccharophagus degradans (strain 2-40 / ATCC 43961 / DSM 17024).